The chain runs to 89 residues: Small ribosomal subunit protein uS15 (89 aa).

This sequence belongs to the universal ribosomal protein uS15 family. As to quaternary structure, part of the 30S ribosomal subunit. Forms a bridge to the 50S subunit in the 70S ribosome, contacting the 23S rRNA.

Its function is as follows. One of the primary rRNA binding proteins, it binds directly to 16S rRNA where it helps nucleate assembly of the platform of the 30S subunit by binding and bridging several RNA helices of the 16S rRNA. In terms of biological role, forms an intersubunit bridge (bridge B4) with the 23S rRNA of the 50S subunit in the ribosome. In Beutenbergia cavernae (strain ATCC BAA-8 / DSM 12333 / CCUG 43141 / JCM 11478 / NBRC 16432 / NCIMB 13614 / HKI 0122), this protein is Small ribosomal subunit protein uS15.